Reading from the N-terminus, the 111-residue chain is Cytochrome c 2.1 (111 aa).

S2 is modified (N-acetylserine). Residues C20, C23, H24, and M85 each coordinate heme c.

It belongs to the cytochrome c family. Binds 1 heme c group covalently per subunit.

It localises to the mitochondrion intermembrane space. In terms of biological role, electron carrier protein. The oxidized form of the cytochrome c heme group can accept an electron from the heme group of the cytochrome c1 subunit of cytochrome reductase. Cytochrome c then transfers this electron to the cytochrome oxidase complex, the final protein carrier in the mitochondrial electron-transport chain. The polypeptide is Cytochrome c 2.1 (cyc-2.1) (Caenorhabditis elegans).